A 731-amino-acid chain; its full sequence is Anaphase-promoting complex subunit 2 (731 aa).

Belongs to the cullin family. As to quaternary structure, the APC/C is probably composed of at least 12 subunits: apc-2, apc-10, apc-11, cdc-26, emb-1, emb-27, emb-30, mat-1, mat-2, mat-3, such-1 and gfi-3.

Its pathway is protein modification; protein ubiquitination. Its function is as follows. Probable component of the anaphase promoting complex/cyclosome (APC/C), a cell cycle-regulated ubiquitin ligase that controls progression through mitosis and the G1 phase of the cell cycle. The APC/C complex acts by mediating ubiquitination and subsequent degradation of target proteins. Developmental role in early embryogenesis and the metaphase to anaphase transition in meiosis and mitosis. In Caenorhabditis elegans, this protein is Anaphase-promoting complex subunit 2.